We begin with the raw amino-acid sequence, 201 residues long: Mediator of RNA polymerase II transcription subunit 19 (201 aa).

Positions 166-201 (GTGKSNAKKRKNRSNGSSMATPNSEMQDDVKRRRLE) are disordered.

Belongs to the Mediator complex subunit 19 family. Component of the Mediator complex.

It is found in the nucleus. Its function is as follows. Component of the Mediator complex, a coactivator involved in the regulated transcription of nearly all RNA polymerase II-dependent genes. Mediator functions as a bridge to convey information from gene-specific regulatory proteins to the basal RNA polymerase II transcription machinery. Mediator is recruited to promoters by direct interactions with regulatory proteins and serves as a scaffold for the assembly of a functional preinitiation complex with RNA polymerase II and the general transcription factors. In Candida glabrata (strain ATCC 2001 / BCRC 20586 / JCM 3761 / NBRC 0622 / NRRL Y-65 / CBS 138) (Yeast), this protein is Mediator of RNA polymerase II transcription subunit 19 (ROX3).